The chain runs to 317 residues: Zinc transporter ZIP3 (317 aa).

The Extracellular portion of the chain corresponds to 1 to 3 (MSQ). Residues 4 to 24 (LLVAKVLCMVGVFFFMLLGSL) traverse the membrane as a helical segment. At 25 to 42 (LPVKVIEADFEKAHRSKK) the chain is on the cytoplasmic side. Residues 43–63 (VLSLCNTFGGGVFLATCFNAL) traverse the membrane as a helical segment. The Extracellular segment spans residues 64–85 (LPAVRDKLQQVLSLGHISTDYP). The chain crosses the membrane as a helical span at residues 86 to 106 (LAETLMMVGFFLTVFVEQLVL). Topologically, residues 107–172 (TFRRERPPFI…RELGRPGPLR (66 aa)) are cytoplasmic. 2 positions are modified to phosphoserine: Ser-125 and Ser-129. Residues 173-193 (LLSLVFALSAHSVFEGLALGL) form a helical membrane-spanning segment. At 194–199 (QEEGER) the chain is on the extracellular side. The helical transmembrane segment at 200–220 (VVSLFVGVAVHETLVAVALGI) threads the bilayer. Residues 221–232 (SMARSAVPLRDA) are Cytoplasmic-facing. The helical transmembrane segment at 233–253 (AKLAVTVSAMIPVGIGLGLGI) threads the bilayer. At 254 to 265 (ESARSVASSVAS) the chain is on the extracellular side. A helical transmembrane segment spans residues 266–286 (ALLQGLAGGTFLFVTFLEILA). At 287–294 (KELEERSE) the chain is on the cytoplasmic side. A helical membrane pass occupies residues 295–315 (QLLKVLFLVLGYAVLAGMVFL). Residues 316–317 (KW) are Extracellular-facing.

The protein belongs to the ZIP transporter (TC 2.A.5) family.

The protein localises to the cell membrane. It localises to the apical cell membrane. The catalysed reaction is Zn(2+)(in) = Zn(2+)(out). Functionally, transporter for the divalent cation Zn(2+). Mediates the influx of Zn(2+) into cells from extracellular space. Controls Zn(2+) accumulation into dentate gyrus granule cells in the hippocampus. Mediates Zn(2+) reuptake from the secreted milk within the alveolar lumen. The protein is Zinc transporter ZIP3 (Slc39a3) of Rattus norvegicus (Rat).